The following is a 272-amino-acid chain: NH(3)-dependent NAD(+) synthetase (272 aa).

45–52 (GISGGQDS) contributes to the ATP binding site. A Mg(2+)-binding site is contributed by Asp51. A deamido-NAD(+)-binding site is contributed by Arg138. Thr158 contributes to the ATP binding site. Glu163 provides a ligand contact to Mg(2+). Deamido-NAD(+) is bound by residues Lys171 and Asp178. Residues Lys187 and Thr209 each coordinate ATP. 258 to 259 (HK) serves as a coordination point for deamido-NAD(+).

This sequence belongs to the NAD synthetase family. Homodimer.

It carries out the reaction deamido-NAD(+) + NH4(+) + ATP = AMP + diphosphate + NAD(+) + H(+). It participates in cofactor biosynthesis; NAD(+) biosynthesis; NAD(+) from deamido-NAD(+) (ammonia route): step 1/1. In terms of biological role, catalyzes the ATP-dependent amidation of deamido-NAD to form NAD. Uses ammonia as a nitrogen source. In Bacillus mycoides (strain KBAB4) (Bacillus weihenstephanensis), this protein is NH(3)-dependent NAD(+) synthetase.